A 371-amino-acid chain; its full sequence is Chaperone protein DnaJ (371 aa).

The J domain maps to 6-71; sequence DYYEILGVEK…QKRAQYDRFG (66 aa). The segment at 104 to 123 is disordered; the sequence is GGMGGQQRQRRNRNEPRRGS. The CR-type zinc-finger motif lies at 139–217; it reads GIEKEIEFDT…CKGKGRVAEH (79 aa). Cys-152, Cys-155, Cys-169, Cys-172, Cys-191, Cys-194, Cys-205, and Cys-208 together coordinate Zn(2+). 4 CXXCXGXG motif repeats span residues 152-159, 169-176, 191-198, and 205-212; these read CDECKGTG, CGTCGGSG, CPTCHGQG, and CKPCKGKG.

It belongs to the DnaJ family. As to quaternary structure, homodimer. It depends on Zn(2+) as a cofactor.

The protein localises to the cytoplasm. In terms of biological role, participates actively in the response to hyperosmotic and heat shock by preventing the aggregation of stress-denatured proteins and by disaggregating proteins, also in an autonomous, DnaK-independent fashion. Unfolded proteins bind initially to DnaJ; upon interaction with the DnaJ-bound protein, DnaK hydrolyzes its bound ATP, resulting in the formation of a stable complex. GrpE releases ADP from DnaK; ATP binding to DnaK triggers the release of the substrate protein, thus completing the reaction cycle. Several rounds of ATP-dependent interactions between DnaJ, DnaK and GrpE are required for fully efficient folding. Also involved, together with DnaK and GrpE, in the DNA replication of plasmids through activation of initiation proteins. This is Chaperone protein DnaJ from Bdellovibrio bacteriovorus (strain ATCC 15356 / DSM 50701 / NCIMB 9529 / HD100).